Reading from the N-terminus, the 500-residue chain is Glutamate decarboxylase 3 (500 aa).

Phosphoserine is present on serine 8. Position 277 is an N6-(pyridoxal phosphate)lysine (lysine 277).

Belongs to the group II decarboxylase family. Homohexamer. Interacts with calmodulin. Pyridoxal 5'-phosphate is required as a cofactor. As to expression, expressed at low levels in siliques.

The catalysed reaction is L-glutamate + H(+) = 4-aminobutanoate + CO2. In terms of biological role, catalyzes the production of GABA. The calmodulin-binding is calcium-dependent and it is proposed that this may, directly or indirectly, form a calcium regulated control of GABA biosynthesis. This chain is Glutamate decarboxylase 3 (GAD3), found in Arabidopsis thaliana (Mouse-ear cress).